Reading from the N-terminus, the 514-residue chain is 2,3-bisphosphoglycerate-independent phosphoglycerate mutase (514 aa).

Residues Asp14 and Ser64 each coordinate Mn(2+). Ser64 acts as the Phosphoserine intermediate in catalysis. Substrate-binding positions include His125, 155-156 (RD), Arg187, Arg193, 263-266 (RADR), and Lys336. Mn(2+)-binding residues include Asp403, His407, Asp444, His445, and His463.

Belongs to the BPG-independent phosphoglycerate mutase family. Monomer. The cofactor is Mn(2+).

It catalyses the reaction (2R)-2-phosphoglycerate = (2R)-3-phosphoglycerate. The protein operates within carbohydrate degradation; glycolysis; pyruvate from D-glyceraldehyde 3-phosphate: step 3/5. Its function is as follows. Catalyzes the interconversion of 2-phosphoglycerate and 3-phosphoglycerate. The sequence is that of 2,3-bisphosphoglycerate-independent phosphoglycerate mutase from Shewanella halifaxensis (strain HAW-EB4).